A 150-amino-acid chain; its full sequence is D-aminoacyl-tRNA deacylase (150 aa).

The Gly-cisPro motif, important for rejection of L-amino acids motif lies at 138–139 (GP).

Belongs to the DTD family. In terms of assembly, homodimer.

Its subcellular location is the cytoplasm. The catalysed reaction is glycyl-tRNA(Ala) + H2O = tRNA(Ala) + glycine + H(+). It carries out the reaction a D-aminoacyl-tRNA + H2O = a tRNA + a D-alpha-amino acid + H(+). In terms of biological role, an aminoacyl-tRNA editing enzyme that deacylates mischarged D-aminoacyl-tRNAs. Also deacylates mischarged glycyl-tRNA(Ala), protecting cells against glycine mischarging by AlaRS. Acts via tRNA-based rather than protein-based catalysis; rejects L-amino acids rather than detecting D-amino acids in the active site. By recycling D-aminoacyl-tRNA to D-amino acids and free tRNA molecules, this enzyme counteracts the toxicity associated with the formation of D-aminoacyl-tRNA entities in vivo and helps enforce protein L-homochirality. In Chlorobium limicola (strain DSM 245 / NBRC 103803 / 6330), this protein is D-aminoacyl-tRNA deacylase.